The chain runs to 270 residues: NAD kinase (270 aa).

Catalysis depends on D62, which acts as the Proton acceptor. NAD(+) is bound by residues D62–G63, R67, N129–D130, K140, D159, I167, T170–S175, A194, and Q227.

It belongs to the NAD kinase family. The cofactor is a divalent metal cation.

It is found in the cytoplasm. The catalysed reaction is NAD(+) + ATP = ADP + NADP(+) + H(+). Its function is as follows. Involved in the regulation of the intracellular balance of NAD and NADP, and is a key enzyme in the biosynthesis of NADP. Catalyzes specifically the phosphorylation on 2'-hydroxyl of the adenosine moiety of NAD to yield NADP. The sequence is that of NAD kinase from Picrophilus torridus (strain ATCC 700027 / DSM 9790 / JCM 10055 / NBRC 100828 / KAW 2/3).